Consider the following 639-residue polypeptide: Lipoteichoic acid synthase 1 (639 aa).

At 1–3 the chain is on the cytoplasmic side; it reads MKK. Residues 4–24 form a helical membrane-spanning segment; the sequence is LFSYKLSFFVLAVILFWAKTY. The Extracellular portion of the chain corresponds to 25–41; sequence LSYKTEFNLGVKGTTQE. A helical membrane pass occupies residues 42-62; that stretch reads ILLIFNPFSSAVFFLGLALLA. Over 63–67 the chain is Cytoplasmic; the sequence is KGRKS. The chain crosses the membrane as a helical span at residues 68 to 88; sequence AIIMLIIDFLMTFVLYANILF. The Extracellular portion of the chain corresponds to 89–116; sequence YRFFDDFLTFPNIKQSGNVGNMGDGIFS. Residues 117–137 form a helical membrane-spanning segment; sequence IMAGHDIFYFLDIIILIAVLI. The Cytoplasmic segment spans residues 138 to 150; it reads WRPELKEYKMKKR. Residues 151–171 traverse the membrane as a helical segment; that stretch reads FASLVILSGIALFFINLHYAE. The Extracellular segment spans residues 172–639; that stretch reads KDRPQLLTRT…YHYGKEKEIK (468 aa). Mn(2+) contacts are provided by Glu-252 and Thr-297. Thr-297 is a catalytic residue. A substrate-binding site is contributed by His-413. Residues Asp-472 and His-473 each coordinate Mn(2+).

It belongs to the LTA synthase family. Post-translationally, proteolytically cleaved by the type I signal peptidases SipT and SipV.

The protein resides in the cell membrane. The protein localises to the secreted. The protein operates within cell wall biogenesis; lipoteichoic acid biosynthesis. Catalyzes the polymerization of lipoteichoic acid (LTA) polyglycerol phosphate, a reaction that presumably uses phosphatidylglycerol (PG) as substrate. This is Lipoteichoic acid synthase 1 (ltaS1) from Bacillus subtilis (strain 168).